Consider the following 481-residue polypeptide: Aspartyl/glutamyl-tRNA(Asn/Gln) amidotransferase subunit B (481 aa).

Belongs to the GatB/GatE family. GatB subfamily. As to quaternary structure, heterotrimer of A, B and C subunits.

The catalysed reaction is L-glutamyl-tRNA(Gln) + L-glutamine + ATP + H2O = L-glutaminyl-tRNA(Gln) + L-glutamate + ADP + phosphate + H(+). It carries out the reaction L-aspartyl-tRNA(Asn) + L-glutamine + ATP + H2O = L-asparaginyl-tRNA(Asn) + L-glutamate + ADP + phosphate + 2 H(+). In terms of biological role, allows the formation of correctly charged Asn-tRNA(Asn) or Gln-tRNA(Gln) through the transamidation of misacylated Asp-tRNA(Asn) or Glu-tRNA(Gln) in organisms which lack either or both of asparaginyl-tRNA or glutaminyl-tRNA synthetases. The reaction takes place in the presence of glutamine and ATP through an activated phospho-Asp-tRNA(Asn) or phospho-Glu-tRNA(Gln). The polypeptide is Aspartyl/glutamyl-tRNA(Asn/Gln) amidotransferase subunit B (Teredinibacter turnerae (strain ATCC 39867 / T7901)).